The following is a 45-amino-acid chain: Large ribosomal subunit protein bL34 (45 aa).

Residues 1 to 45 (MTKRTLGGTVRKQKRTSGFRARMRSHTGQNVIRARRKKGRHRLTV) are disordered. Composition is skewed to basic residues over residues 11–25 (RKQKRTSGFRARMRS) and 33–45 (RARRKKGRHRLTV).

It belongs to the bacterial ribosomal protein bL34 family.

In Picosynechococcus sp. (strain ATCC 27264 / PCC 7002 / PR-6) (Agmenellum quadruplicatum), this protein is Large ribosomal subunit protein bL34.